A 260-amino-acid polypeptide reads, in one-letter code: Hydroxyacylglutathione hydrolase (260 aa).

Zn(2+) contacts are provided by H66, H68, D70, H71, H125, D150, and H188.

The protein belongs to the metallo-beta-lactamase superfamily. Glyoxalase II family. Monomer. It depends on Zn(2+) as a cofactor.

It carries out the reaction an S-(2-hydroxyacyl)glutathione + H2O = a 2-hydroxy carboxylate + glutathione + H(+). It functions in the pathway secondary metabolite metabolism; methylglyoxal degradation; (R)-lactate from methylglyoxal: step 2/2. Functionally, thiolesterase that catalyzes the hydrolysis of S-D-lactoyl-glutathione to form glutathione and D-lactic acid. This Prochlorococcus marinus (strain MIT 9303) protein is Hydroxyacylglutathione hydrolase.